A 275-amino-acid chain; its full sequence is Probable histone chaperone asf-1 (275 aa).

Composition is skewed to acidic residues over residues 157–166 (EDPVAEPVED), 183–207 (DGQE…EVDL), and 230–247 (KMED…DDEP). Residues 157–275 (EDPVAEPVED…SDKTNNEMVQ (119 aa)) form a disordered region. A compositionally biased stretch (basic and acidic residues) spans 265–275 (LSDKTNNEMVQ).

The protein belongs to the ASF1 family. In terms of assembly, interacts with histone H3 and histone H4.

It is found in the nucleus. Histone chaperone that facilitates histone deposition and histone exchange and removal during nucleosome assembly and disassembly. In Caenorhabditis elegans, this protein is Probable histone chaperone asf-1.